We begin with the raw amino-acid sequence, 317 residues long: Biotin synthase (317 aa).

Residues 42–260 form the Radical SAM core domain; it reads NRIQLSTLLS…IAVTRLCMPK (219 aa). Cys-57, Cys-61, and Cys-64 together coordinate [4Fe-4S] cluster. Cys-101, Cys-132, Cys-192, and Arg-264 together coordinate [2Fe-2S] cluster.

This sequence belongs to the radical SAM superfamily. Biotin synthase family. As to quaternary structure, homodimer. It depends on [4Fe-4S] cluster as a cofactor. The cofactor is [2Fe-2S] cluster.

It carries out the reaction (4R,5S)-dethiobiotin + (sulfur carrier)-SH + 2 reduced [2Fe-2S]-[ferredoxin] + 2 S-adenosyl-L-methionine = (sulfur carrier)-H + biotin + 2 5'-deoxyadenosine + 2 L-methionine + 2 oxidized [2Fe-2S]-[ferredoxin]. It functions in the pathway cofactor biosynthesis; biotin biosynthesis; biotin from 7,8-diaminononanoate: step 2/2. Catalyzes the conversion of dethiobiotin (DTB) to biotin by the insertion of a sulfur atom into dethiobiotin via a radical-based mechanism. This is Biotin synthase from Thiobacillus denitrificans (strain ATCC 25259 / T1).